The following is a 5386-amino-acid chain: Nonribosomal peptide synthetase 2 (5386 aa).

The adenylation 1 stretch occupies residues 45–435 (HDANAIDFLE…QGLLECLGRV (391 aa)). The Carrier 1 domain maps to 544-617 (SPKDPIGHSV…DLIEVCRESK (74 aa)). Residue S578 is modified to O-(pantetheine 4'-phosphoryl)serine. Positions 652–1059 (LPCTPLQEAM…VDADRHVSAI (408 aa)) are condensation 1. An adenylation 2 region spans residues 1089–1482 (EKWAATDPHR…GRTDDQVKIR (394 aa)). Residues 1611-1688 (ELLSQWERDV…SLASLKKLQS (78 aa)) form the Carrier 2 domain. Position 1648 is an O-(pantetheine 4'-phosphoryl)serine (S1648). The interval 1731–2141 (ILPCTPLQEA…ALSADTDMFP (411 aa)) is condensation 2. Positions 2166 to 2551 (FERTALLHPD…GRLDDQVKIR (386 aa)) are adenylation 3. The Carrier 3 domain occupies 2652–2725 (SKTESEVRNI…DLAEHLDQIS (74 aa)). S2686 is subject to O-(pantetheine 4'-phosphoryl)serine. The condensation 3 stretch occupies residues 2763–3174 (RPCTPLQNGM…HSQIPLAKTD (412 aa)). Residues 3202-3603 (EKTAQEHPQR…GRADDQVKLR (402 aa)) are adenylation 4. The Carrier 4 domain occupies 3728–3805 (EQWSKQEEKL…RLAKSLAANS (78 aa)). Residue S3765 is modified to O-(pantetheine 4'-phosphoryl)serine. The tract at residues 3846–4250 (LAPCTPLQQG…LDQAINDPSA (405 aa)) is condensation 4. The Carrier 5 domain occupies 4281–4357 (FEWSDNAIAI…KMAQNMSMKN (77 aa)). O-(pantetheine 4'-phosphoryl)serine is present on S4318. The interval 4391-4802 (EEILPLTPLQ…ERAEAPVIDM (412 aa)) is condensation 5. Residues 4821 to 4842 (HTGSGHVESGEDDGQDTPSTET) are disordered. The 74-residue stretch at 4840–4913 (TETTNRIRKI…KMAKLADARA (74 aa)) folds into the Carrier 6 domain. The residue at position 4874 (S4874) is an O-(pantetheine 4'-phosphoryl)serine. The condensation 6 stretch occupies residues 4952-5257 (QMLPVTAGQL…VQAHLRHLND (306 aa)).

This sequence belongs to the NRP synthetase family.

The protein operates within siderophore biosynthesis. Its function is as follows. Nonribosomal peptide synthetase; part of the gene cluster that mediates the biosynthesis of hydroxamate-containing siderophores that play a critical role in virulence. Cochliobolus heterostrophus produces extracellular coprogen-type siderophores including coprogen, neocoprogen I and neocoprogen II, as well as the intracellular siderophore ferricrocin. The role of extracellular siderophores is to supply iron to the fungus during plant infection, and the intracellular ferricrocin is required for intracellular iron distribution and storage with a crucial role in ascus and ascospore development. SIDA2 catalyzes the conversion of L-ornithine to N(5)-hydroxyornithine, the first step in the biosynthesis of all hydroxamate-containing siderophores. The assembly of extracellular coprogen-type siderophores is then performed by the nonribosomal peptide synthetase (NRPS) NPS6 whereas the intracellular siderophore ferricrocin is assembled by NPS2. In Cochliobolus heterostrophus (strain C4 / ATCC 48331 / race T) (Southern corn leaf blight fungus), this protein is Nonribosomal peptide synthetase 2.